The sequence spans 246 residues: Acetoacetate decarboxylase (246 aa).

Residue Lys116 is the Schiff-base intermediate with acetoacetate of the active site.

It belongs to the ADC family.

The enzyme catalyses acetoacetate + H(+) = acetone + CO2. Its function is as follows. Catalyzes the conversion of acetoacetate to acetone and carbon dioxide. This is Acetoacetate decarboxylase from Burkholderia lata (strain ATCC 17760 / DSM 23089 / LMG 22485 / NCIMB 9086 / R18194 / 383).